The primary structure comprises 588 residues: Ankyrin repeat protein OPG003 (588 aa).

5 ANK repeats span residues 69–101, 175–223, 227–259, 300–336, and 339–368; these read CGNSPLHCYTMNTRFNPSVLKILLRHGMRNFDS, DGLT…NINA, IGNTPLHTYLQQYTKHSPRVVYALLSRGADTRI, EGQHLLYLFIKHNQGYGSRSLNILRYLLDRFDIQKDE, and NTMTPLHTAFQNCNNNVASYLVYIGYDINL. The segment at 557 to 574 is PRANC/F-box-like; that stretch reads LPPEIMRNIITKLSDYHL.

It belongs to the orthopoxvirus OPG003 family.

In terms of biological role, may be involved in virus-host protein interaction through the ankyrin repeats and PRANC regions. This chain is Ankyrin repeat protein OPG003 (OPG003), found in Cynomys gunnisoni (Gunnison's prairie dog).